We begin with the raw amino-acid sequence, 473 residues long: FAD-dependent monooxygeanse terM (473 aa).

A signal peptide spans M1–C22. Residues E34, G48, R107, D303, and A316 each contribute to the FAD site. Residues V441 to F461 traverse the membrane as a helical segment.

This sequence belongs to the paxM FAD-dependent monooxygenase family. It depends on FAD as a cofactor.

The protein localises to the membrane. It participates in secondary metabolite biosynthesis. In terms of biological role, FAD-dependent monooxygeanse; part of the gene cluster that mediates the biosynthesis of terpendoles, indole-diterpene (IDT) mycotoxins including terpendole I, terpendole K, terpendole C, as well as the kinesin Eg5 inhibitor terpendole E. Terpendoles biosynthesis begins with the synthesis of geranylgeranyl diphosphate (GGPP) by a yet unidentified GGPP synthase. Condensation of indole-3-glycerol phosphate with GGPP by the prenyltransferase terC then forms 3-geranylgeranylindole (3-GGI), followed by epoxidation and cyclization of this intermediate (by the FAD-dependent monooxygeanse terM and the terpene cyclase terB) to form paspaline. The cytochrome monooxygenase terQ then hydroxylates paspalline at C-11 to yield terpendole E. The cytochrome monooxygenase terP converts terpendole E to 13-desoxyterpendole I, and terQ converts 13-desoxyterpendole I into terpendole I. TerF and terK are required for conversion of terpendole I to terpendole C which is further converted to terpendole K. The chain is FAD-dependent monooxygeanse terM from Tolypocladium album (Soil fungus).